The following is a 101-amino-acid chain: TrfB transcriptional repressor protein (101 aa).

Residues 37–56 constitute a DNA-binding region (H-T-H motif); that stretch reads QATFATSLGLTRGAVSQAVH.

In conjunction with KorB, inhibits the transcription of kilA, trfA and korAB operons. In conjunction with KorC is responsible for the negative control of kilC and kilE operons. This chain is TrfB transcriptional repressor protein (trfB), found in Escherichia coli.